Consider the following 1427-residue polypeptide: ATP-binding cassette transporter abc1 (1427 aa).

Residues 26-46 (LLLFYLSLFSLTNLFLIQKLF) form a helical membrane-spanning segment. N-linked (GlcNAc...) asparagine glycosylation occurs at Asn-49. The next 9 membrane-spanning stretches (helical) occupy residues 63 to 83 (CLLE…SFYL), 87 to 107 (AVWW…NILS), 115 to 135 (LFSW…LISI), 155 to 175 (LLLP…PLFF), 197 to 217 (CSIF…WKSW), 262 to 282 (ILLM…TPLA), 298 to 318 (GNSP…ASVV), 345 to 367 (VLTS…YVYN), and 397 to 417 (MYFL…LAIL). The ABC transmembrane type-1 1 domain occupies 262–549 (ILLMVFLSVL…LASVSRQFIQ (288 aa)). N-linked (GlcNAc...) asparagine glycosylation occurs at Asn-437. 2 consecutive transmembrane segments (helical) span residues 489-509 (IIFK…TFAI) and 513-533 (IMGH…FGLL). N-linked (GlcNAc...) asparagine glycans are attached at residues Asn-567, Asn-581, and Asn-601. The region spanning 579–807 (FENTSLSWSP…PSTFFSSNTK (229 aa)) is the ABC transporter 1 domain. Residues 609 to 629 (FTLVVGSTGSGKSTLAMALLG) traverse the membrane as a helical segment. 614-621 (GSTGSGKS) contributes to the ATP binding site. N-linked (GlcNAc...) asparagine glycosylation is found at Asn-658 and Asn-703. Residues 760-780 (IILFTHNVSLCLPIAENVIVL) form a helical membrane-spanning segment. N-linked (GlcNAc...) asparagine glycosylation is found at Asn-782 and Asn-842. An ABC transmembrane type-1 2 domain is found at 862–1142 (ILGSILLVMM…FVRANNEILT (281 aa)). The next 3 helical transmembrane spans lie at 866–886 (ILLV…IALW), 896–916 (LPSS…YFLM), and 973–993 (LLWA…ITML). Asn-994 is a glycosylation site (N-linked (GlcNAc...) asparagine). Helical transmembrane passes span 995–1015 (VTLV…LVYL), 1086–1106 (LAIR…LIAL), and 1114–1134 (GLVG…LVFV). N-linked (GlcNAc...) asparagine glycans are attached at residues Asn-1161 and Asn-1184. In terms of domain architecture, ABC transporter 2 spans 1180–1422 (VSIKNLTVSY…RRAFWKMCKE (243 aa)). ATP is bound at residue 1214–1221 (GRTGSGKS). Residues 1223–1243 (MGLTLLRFTMIMSGAVEVDGI) traverse the membrane as a helical segment. N-linked (GlcNAc...) asparagine glycosylation occurs at Asn-1324.

It belongs to the ABC transporter superfamily. ABCC family. Conjugate transporter (TC 3.A.1.208) subfamily.

It is found in the membrane. This Schizosaccharomyces pombe (strain 972 / ATCC 24843) (Fission yeast) protein is ATP-binding cassette transporter abc1 (abc1).